Reading from the N-terminus, the 176-residue chain is NAD(P)H-quinone oxidoreductase subunit 6, chloroplastic (176 aa).

5 helical membrane-spanning segments follow: residues 10–30 (FLLV…VLLT), 32–52 (PIFS…FYIL), 61–81 (AQLL…VMFM), 95–115 (VGNG…ITII), and 152–172 (FFLP…GAIA).

The protein belongs to the complex I subunit 6 family. NDH is composed of at least 16 different subunits, 5 of which are encoded in the nucleus.

Its subcellular location is the plastid. The protein localises to the chloroplast thylakoid membrane. The catalysed reaction is a plastoquinone + NADH + (n+1) H(+)(in) = a plastoquinol + NAD(+) + n H(+)(out). It catalyses the reaction a plastoquinone + NADPH + (n+1) H(+)(in) = a plastoquinol + NADP(+) + n H(+)(out). Functionally, NDH shuttles electrons from NAD(P)H:plastoquinone, via FMN and iron-sulfur (Fe-S) centers, to quinones in the photosynthetic chain and possibly in a chloroplast respiratory chain. The immediate electron acceptor for the enzyme in this species is believed to be plastoquinone. Couples the redox reaction to proton translocation, and thus conserves the redox energy in a proton gradient. The chain is NAD(P)H-quinone oxidoreductase subunit 6, chloroplastic (ndhG) from Populus alba (White poplar).